The sequence spans 132 residues: Small ribosomal subunit protein uS8 (132 aa).

This sequence belongs to the universal ribosomal protein uS8 family. As to quaternary structure, part of the 30S ribosomal subunit. Contacts proteins S5 and S12.

Functionally, one of the primary rRNA binding proteins, it binds directly to 16S rRNA central domain where it helps coordinate assembly of the platform of the 30S subunit. The sequence is that of Small ribosomal subunit protein uS8 from Geobacter sulfurreducens (strain ATCC 51573 / DSM 12127 / PCA).